We begin with the raw amino-acid sequence, 622 residues long: WD repeat-containing protein 70 (622 aa).

Basic and acidic residues predominate over residues 37-55; it reads TAVERSKKTLEAREKEEQI. The disordered stretch occupies residues 37 to 141; the sequence is TAVERSKKTL…DNPVKGIPDS (105 aa). Residues 67–84 are compositionally biased toward low complexity; sequence SSSRQKNTDTSSSSSGSE. Residues 120 to 132 show a composition bias toward acidic residues; the sequence is SDDEDEEQHEDDD. 7 WD repeats span residues 148-187, 195-236, 249-289, 298-337, 344-383, 389-434, and 437-476; these read HGTKTVSALGLDPSGARLVTGGFDYDVRFWDFAGMDASLQ, CECH…ECVK, GHTA…KHKG, GKRVIPTCCTYSRDGKFIAAGCQDGSIQIWDRNMSVHTKF, TPGTDTSCVTFSYAGNILATRGGDDTLKTWDIRKFKNPLN, ANYF…KVYE, and VTEASVVRCLWHPKLNQIMVGTGNGLAKVYYDPNRSQRGA. Positions 508-533 are enriched in basic and acidic residues; sequence REPRQRSTRKQLEKDRLDPVKSHKPE. Disordered stretches follow at residues 508–549 and 602–622; these read REPR…GTHG and AEVESDEEETDNEPEWKKRKI. The span at 539-549 shows a compositional bias: gly residues; sequence PGRGGRVGTHG. The segment covering 604-614 has biased composition (acidic residues); the sequence is VESDEEETDNE.

Belongs to the WD repeat GAD-1 family.

The polypeptide is WD repeat-containing protein 70 (wdr70) (Xenopus tropicalis (Western clawed frog)).